The primary structure comprises 207 residues: Outer-membrane lipoprotein LolB (207 aa).

Residues M1–A21 form the signal peptide. Residue C22 is the site of N-palmitoyl cysteine attachment. A lipid anchor (S-diacylglycerol cysteine) is attached at C22.

Belongs to the LolB family. In terms of assembly, monomer.

It localises to the cell outer membrane. Its function is as follows. Plays a critical role in the incorporation of lipoproteins in the outer membrane after they are released by the LolA protein. This is Outer-membrane lipoprotein LolB from Yersinia pseudotuberculosis serotype IB (strain PB1/+).